A 169-amino-acid chain; its full sequence is Protein-export protein SecB (169 aa).

This sequence belongs to the SecB family. Homotetramer, a dimer of dimers. One homotetramer interacts with 1 SecA dimer.

The protein localises to the cytoplasm. In terms of biological role, one of the proteins required for the normal export of preproteins out of the cell cytoplasm. It is a molecular chaperone that binds to a subset of precursor proteins, maintaining them in a translocation-competent state. It also specifically binds to its receptor SecA. The sequence is that of Protein-export protein SecB from Haemophilus influenzae (strain PittEE).